Consider the following 192-residue polypeptide: Peptidyl-tRNA hydrolase (192 aa).

Y17 is a binding site for tRNA. The active-site Proton acceptor is the H22. Residues F68, N70, and N116 each coordinate tRNA.

It belongs to the PTH family. As to quaternary structure, monomer.

The protein localises to the cytoplasm. The catalysed reaction is an N-acyl-L-alpha-aminoacyl-tRNA + H2O = an N-acyl-L-amino acid + a tRNA + H(+). Functionally, hydrolyzes ribosome-free peptidyl-tRNAs (with 1 or more amino acids incorporated), which drop off the ribosome during protein synthesis, or as a result of ribosome stalling. Its function is as follows. Catalyzes the release of premature peptidyl moieties from peptidyl-tRNA molecules trapped in stalled 50S ribosomal subunits, and thus maintains levels of free tRNAs and 50S ribosomes. This chain is Peptidyl-tRNA hydrolase, found in Buchnera aphidicola subsp. Cinara cedri (strain Cc).